A 128-amino-acid polypeptide reads, in one-letter code: MILGLGLDVVEVARIQRILAGPPARAERFLARVFAPSERAYCDARQDRATRYAARFAAKEAAVKALGTPEGVRWLDLVVERGSGAPSLALDGLAADAARRLGVARVHLTLTHDAGVAVAAVILEGTGP.

2 residues coordinate Mg(2+): Asp-8 and Glu-60.

It belongs to the P-Pant transferase superfamily. AcpS family. Mg(2+) is required as a cofactor.

Its subcellular location is the cytoplasm. The enzyme catalyses apo-[ACP] + CoA = holo-[ACP] + adenosine 3',5'-bisphosphate + H(+). Transfers the 4'-phosphopantetheine moiety from coenzyme A to a Ser of acyl-carrier-protein. This is Holo-[acyl-carrier-protein] synthase from Anaeromyxobacter sp. (strain K).